The chain runs to 229 residues: N-acetyltransferase MPR1 (229 aa).

The region spanning Phe65–Thr219 is the N-acetyltransferase domain. Asn135 lines the substrate pocket. Arg145–Gly150 contacts CoA. Position 172–173 (Asn172–Leu173) interacts with substrate.

This sequence belongs to the acetyltransferase family. Homodimer. In terms of processing, not glycosylated.

It is found in the cytoplasm. Its subcellular location is the mitochondrion. The catalysed reaction is L-glutamate 5-semialdehyde + acetyl-CoA = N-acetyl-L-glutamate 5-semialdehyde + CoA + H(+). In terms of biological role, N-acetyltransferase involved in oxidative stress resistance. Acetylates the toxic proline metabolism intermediate (S)-1-pyrroline-5-carboxylate (P5C), or more likely its spontaneously forming tautomer glutamate-5-semialdehyde (GSA) into N-acetyl-GSA for arginine synthesis in the mitochondria. P5C has been shown to increase the levels of reactive oxygen species (ROS) in the cell by inhibiting the function of the respiratory chain in the mitochondria. The enzyme is able to reduce intracellular ROS levels under P5C-induced oxidative stress and protects cells from damage by oxidative stress. Also acetylates and thereby detoxifies the proline analog azetidine-2-carboxylate (AZC), however it is unlikely that AZC is a natural substrate as it occurs only in plants belonging to the Lilaceae family. Does not acetylate proline. This Saccharomyces cerevisiae (Baker's yeast) protein is N-acetyltransferase MPR1.